Consider the following 327-residue polypeptide: Flotillin-like protein FloA (327 aa).

2 helical membrane passes run valine 8–isoleucine 28 and proline 29–methionine 49.

This sequence belongs to the flotillin-like FloA family. Homooligomerizes.

Its subcellular location is the cell membrane. The protein localises to the membrane raft. In terms of biological role, found in functional membrane microdomains (FMM) that may be equivalent to eukaryotic membrane rafts. FMMs are highly dynamic and increase in number as cells age. Flotillins are thought to be important factors in membrane fluidity. This chain is Flotillin-like protein FloA, found in Exiguobacterium sibiricum (strain DSM 17290 / CCUG 55495 / CIP 109462 / JCM 13490 / 255-15).